A 267-amino-acid chain; its full sequence is Small ribosomal subunit protein uS5 (267 aa).

A disordered region spans residues 1–37 (MADEAPARSGFRGGFGSRGGRGGRGRGRGRWARGRGK). Over residues 11-20 (FRGGFGSRGG) the composition is skewed to gly residues. A compositionally biased stretch (basic residues) spans 21-34 (RGGRGRGRGRWARG). Phosphoserine is present on Ser60. The S5 DRBM domain maps to 85–148 (LKDEVLKIMP…ILAKLSVVPV (64 aa)).

This sequence belongs to the universal ribosomal protein uS5 family.

Functionally, component of the ribosome, a large ribonucleoprotein complex responsible for the synthesis of proteins in the cell. The small ribosomal subunit (SSU) binds messenger RNAs (mRNAs) and translates the encoded message by selecting cognate aminoacyl-transfer RNA (tRNA) molecules. The large subunit (LSU) contains the ribosomal catalytic site termed the peptidyl transferase center (PTC), which catalyzes the formation of peptide bonds, thereby polymerizing the amino acids delivered by tRNAs into a polypeptide chain. The nascent polypeptides leave the ribosome through a tunnel in the LSU and interact with protein factors that function in enzymatic processing, targeting, and the membrane insertion of nascent chains at the exit of the ribosomal tunnel. Plays a role in the assembly and function of the 40S ribosomal subunit. Mutations in this protein affects the control of translational fidelity. Involved in nucleolar processing of pre-18S ribosomal RNA and ribosome assembly. Has a specific developmental role during oogenesis. In Drosophila melanogaster (Fruit fly), this protein is Small ribosomal subunit protein uS5 (RpS2).